We begin with the raw amino-acid sequence, 281 residues long: Para-Rep C1 (281 aa).

A CRESS-DNA virus Rep endonuclease domain is found at 3-97 (TLQGTFWCFT…VAGPWTYGEL (95 aa)). Residues 10-13 (CFTL) carry the RCR-1 motif. 2 residues coordinate a divalent metal cation: Glu36 and His42. Residues 42–44 (HLQ) carry the RCR-2 motif. The Nuclear localization signal motif lies at 51 to 71 (KRSTLKMMKELLPGAHLEVSK). Residue Tyr80 is the For DNA cleavage activity of the active site. The RCR-3 motif lies at 80–83 (YAMK). Residue Glu85 participates in a divalent metal cation binding. The Nuclear localization signal signature appears at 97–103 (LLKKGSN). 173-181 (GPQGGEGKT) contacts ATP.

It belongs to the nanoviridea/circoviridae replication-associated protein family. In terms of assembly, homooligomer (Potential). Rep binds to repeated DNA motifs (iterons). It depends on Mg(2+) as a cofactor. The cofactor is Mn(2+).

Its subcellular location is the host nucleus. The catalysed reaction is ATP + H2O = ADP + phosphate + H(+). Functionally, initiates and terminates the replication only of its own subviral DNA molecule. The closed circular ssDNA genome is first converted to a superhelical dsDNA. Rep binds a specific hairpin at the genome origin of replication. Introduces an endonucleolytic nick within the intergenic region of the genome, thereby initiating the rolling circle replication (RCR). Following cleavage, binds covalently to the 5'-phosphate of DNA as a tyrosyl ester. The cleavage gives rise to a free 3'-OH that serves as a primer for the cellular DNA polymerase. The polymerase synthesizes the (+) strand DNA by rolling circle mechanism. After one round of replication, a Rep-catalyzed nucleotidyl transfer reaction releases a circular single-stranded virus genome, thereby terminating the replication. Displays origin-specific DNA cleavage, nucleotidyl transferase, ATPase and helicase activities. This Milk vetch dwarf C1 alphasatellite (MVDC1A) protein is Para-Rep C1 (C1).